The chain runs to 238 residues: Ribitol-5-phosphate cytidylyltransferase (238 aa).

CTP contacts are provided by residues Leu7–Gly10 and Gly81–Ser87.

Belongs to the IspD/TarI cytidylyltransferase family. TarI subfamily.

The catalysed reaction is D-ribitol 5-phosphate + CTP + H(+) = CDP-L-ribitol + diphosphate. It functions in the pathway cell wall biogenesis; poly(ribitol phosphate) teichoic acid biosynthesis. Its function is as follows. Catalyzes the transfer of the cytidylyl group of CTP to D-ribitol 5-phosphate. The sequence is that of Ribitol-5-phosphate cytidylyltransferase from Staphylococcus epidermidis (strain ATCC 12228 / FDA PCI 1200).